The following is a 140-amino-acid chain: Smith-Magenis syndrome chromosomal region candidate gene 5 protein (140 aa).

The disordered stretch occupies residues Cys43–Ser77. A compositionally biased stretch (pro residues) spans Gln49–Ser58.

Widely expressed.

The sequence is that of Smith-Magenis syndrome chromosomal region candidate gene 5 protein (SMCR5) from Homo sapiens (Human).